The primary structure comprises 222 residues: Eukaryotic translation initiation factor 3 subunit K (222 aa).

Residues 46 to 208 (YDLEANLAVL…KIKTKNITEK (163 aa)) form the PCI domain.

The protein belongs to the eIF-3 subunit K family. Component of the eukaryotic translation initiation factor 3 (eIF-3) complex. The eIF-3 complex interacts with pix.

The protein localises to the cytoplasm. Functionally, component of the eukaryotic translation initiation factor 3 (eIF-3) complex, which is involved in protein synthesis of a specialized repertoire of mRNAs and, together with other initiation factors, stimulates binding of mRNA and methionyl-tRNAi to the 40S ribosome. The eIF-3 complex specifically targets and initiates translation of a subset of mRNAs involved in cell proliferation. The chain is Eukaryotic translation initiation factor 3 subunit K from Drosophila virilis (Fruit fly).